Reading from the N-terminus, the 114-residue chain is Large ribosomal subunit protein uL22 (114 aa).

Belongs to the universal ribosomal protein uL22 family. Part of the 50S ribosomal subunit.

This protein binds specifically to 23S rRNA; its binding is stimulated by other ribosomal proteins, e.g. L4, L17, and L20. It is important during the early stages of 50S assembly. It makes multiple contacts with different domains of the 23S rRNA in the assembled 50S subunit and ribosome. Functionally, the globular domain of the protein is located near the polypeptide exit tunnel on the outside of the subunit, while an extended beta-hairpin is found that lines the wall of the exit tunnel in the center of the 70S ribosome. This is Large ribosomal subunit protein uL22 from Mycoplasmopsis agalactiae (strain NCTC 10123 / CIP 59.7 / PG2) (Mycoplasma agalactiae).